The following is a 1122-amino-acid chain: Histidine kinase CKI1 (1122 aa).

Residues 1-12 lie on the Cytoplasmic side of the membrane; the sequence is MMVKVTKLVASR. A helical transmembrane segment spans residues 13-33; that stretch reads PIVVFCVLAFLVVVFECIWIS. Residues 34-345 are Extracellular-facing; it reads NWRTTTENLV…KHQAEKAKYQ (312 aa). Residues 346–366 form a helical membrane-spanning segment; the sequence is LIVVMIFLGFGWPVWFVWFMM. The Cytoplasmic portion of the chain corresponds to 367–1122; the sequence is QATRREMHMR…VIREIESKRH (756 aa). The Histidine kinase domain occupies 402–671; the sequence is NASHDIRGAL…CFQFNVLLTT (270 aa). At His405 the chain carries Phosphohistidine; by autocatalysis. Residues 918 to 928 show a composition bias toward basic and acidic residues; it reads AERSPKHKVQE. The segment at 918–981 is disordered; the sequence is AERSPKHKVQ…QETSKPSDDE (64 aa). In terms of domain architecture, Response regulatory spans 987–1120; sequence RVLVVDDNFI…ANVIREIESK (134 aa). Asp1050 bears the 4-aspartylphosphate mark.

Homodimer. Interacts with AHP2 and AHP3. Expressed in vascular tissues of inflorescence stems and floral organs, especially in procambium cells, and in siliques.

It is found in the cell membrane. The enzyme catalyses ATP + protein L-histidine = ADP + protein N-phospho-L-histidine.. Essential protein. Functions as a histidine kinase and transmits the stress signal to a downstream MAPK cascade. This protein undergoes an ATP-dependent autophosphorylation at a conserved histidine residue in the kinase core, and a phosphoryl group is then transferred to a conserved aspartate residue in the receiver domain. Required for the development of megagametophyte in female gametophyte (embryo sac) independently of cytokinin. Contributes to vascular bundle formation and secondary growth in a cytokinin-independent manner, probably by promoting the maintenance of mitotic activity and/or identity of procambial cells. Seems to influence and promote the cytokinin signaling pathway. The protein is Histidine kinase CKI1 (CKI1) of Arabidopsis thaliana (Mouse-ear cress).